A 608-amino-acid chain; its full sequence is Membrane protein insertase YidC (608 aa).

The helical transmembrane segment at 8-28 threads the bilayer; that stretch reads LLLATALSFLVILGWYFFFPP. Positions 33–61 are disordered; it reads PQPATEVTETAPQGDTTAPAAAPSAGAAT. The next 5 helical transmembrane spans lie at 378–398, 448–468, 482–502, 506–526, and 542–562; these read MGVA…PLAY, LPIL…FVTL, LSVP…WAAP, SLLS…SMWV, and IFAW…SGLV.

It belongs to the OXA1/ALB3/YidC family. Type 1 subfamily. As to quaternary structure, interacts with the Sec translocase complex via SecD. Specifically interacts with transmembrane segments of nascent integral membrane proteins during membrane integration.

The protein localises to the cell inner membrane. Required for the insertion and/or proper folding and/or complex formation of integral membrane proteins into the membrane. Involved in integration of membrane proteins that insert both dependently and independently of the Sec translocase complex, as well as at least some lipoproteins. Aids folding of multispanning membrane proteins. The chain is Membrane protein insertase YidC from Ruegeria sp. (strain TM1040) (Silicibacter sp.).